Here is a 117-residue protein sequence, read N- to C-terminus: uncharacterized protein (117 aa).

This is an uncharacterized protein from Schizosaccharomyces pombe (strain 972 / ATCC 24843) (Fission yeast).